Consider the following 627-residue polypeptide: ATP-dependent zinc metalloprotease FtsH 2 (627 aa).

The Cytoplasmic segment spans residues 1–7 (MKFSWRT). The chain crosses the membrane as a helical span at residues 8–28 (ALLWSLPLLVVGFFFWQGSFG). Topologically, residues 29-117 (GADANLGSNT…SHPVRNNGMV (89 aa)) are lumenal. Residues 118–138 (WGFVGNLIFPVLLIASLFFLF) traverse the membrane as a helical segment. The Cytoplasmic portion of the chain corresponds to 139-627 (RRSSNMPGGP…PVKEQLIPQL (489 aa)). Residue 212-219 (GPPGTGKT) participates in ATP binding. Residue His-433 participates in Zn(2+) binding. Glu-434 is an active-site residue. Zn(2+) is bound by residues His-437 and Asp-511.

In the central section; belongs to the AAA ATPase family. It in the C-terminal section; belongs to the peptidase M41 family. As to quaternary structure, homohexamer (Potential). Part of a large (&gt;500 kDa) complex that includes FtsH3 and PSII. Coimmunoprecipitates with YidC. Zn(2+) is required as a cofactor.

Its subcellular location is the cellular thylakoid membrane. Its function is as follows. Acts as a processive, ATP-dependent zinc metallopeptidase for both cytoplasmic and membrane proteins. Plays a role in the quality control of integral membrane proteins. Plays a role in the selective replacement of photosystem II (PSII) protein D1 in the PSII repair cycle following visible-light and UV-B induced damage. If damaged D1 is not removed then new D1 cannot be inserted to restore the PSII reaction center. Seems to also degrade damaged and/or unassembled PSII proteins D2 and PsbB (CP47). May recognize D1 via its first 20 amino acids, as deletion of these prevents the PSII repair cycle. Also seems to degrade cytoplasmic GGPS, glucosylglycerol-phosphate synthase. The sequence is that of ATP-dependent zinc metalloprotease FtsH 2 (ftsH2) from Synechocystis sp. (strain ATCC 27184 / PCC 6803 / Kazusa).